Reading from the N-terminus, the 179-residue chain is Large ribosomal subunit protein uL5 (179 aa).

Belongs to the universal ribosomal protein uL5 family. Part of the 50S ribosomal subunit; part of the 5S rRNA/L5/L18/L25 subcomplex. Contacts the 5S rRNA and the P site tRNA. Forms a bridge to the 30S subunit in the 70S ribosome.

Its function is as follows. This is one of the proteins that bind and probably mediate the attachment of the 5S RNA into the large ribosomal subunit, where it forms part of the central protuberance. In the 70S ribosome it contacts protein S13 of the 30S subunit (bridge B1b), connecting the 2 subunits; this bridge is implicated in subunit movement. Contacts the P site tRNA; the 5S rRNA and some of its associated proteins might help stabilize positioning of ribosome-bound tRNAs. This Photobacterium profundum (strain SS9) protein is Large ribosomal subunit protein uL5.